The chain runs to 96 residues: Co-chaperonin GroES (96 aa).

The protein belongs to the GroES chaperonin family. In terms of assembly, heptamer of 7 subunits arranged in a ring. Interacts with the chaperonin GroEL.

The protein resides in the cytoplasm. Its function is as follows. Together with the chaperonin GroEL, plays an essential role in assisting protein folding. The GroEL-GroES system forms a nano-cage that allows encapsulation of the non-native substrate proteins and provides a physical environment optimized to promote and accelerate protein folding. GroES binds to the apical surface of the GroEL ring, thereby capping the opening of the GroEL channel. This chain is Co-chaperonin GroES, found in Actinobacillus pleuropneumoniae serotype 3 (strain JL03).